Consider the following 347-residue polypeptide: Phenylalanine--tRNA ligase alpha subunit (347 aa).

Mg(2+) is bound at residue Glu265.

Belongs to the class-II aminoacyl-tRNA synthetase family. Phe-tRNA synthetase alpha subunit type 1 subfamily. As to quaternary structure, tetramer of two alpha and two beta subunits. It depends on Mg(2+) as a cofactor.

The protein resides in the cytoplasm. It catalyses the reaction tRNA(Phe) + L-phenylalanine + ATP = L-phenylalanyl-tRNA(Phe) + AMP + diphosphate + H(+). The protein is Phenylalanine--tRNA ligase alpha subunit of Wolbachia pipientis subsp. Culex pipiens (strain wPip).